A 200-amino-acid polypeptide reads, in one-letter code: Cytochrome c biogenesis ATP-binding export protein CcmA (200 aa).

The 200-residue stretch at 1–200 folds into the ABC transporter domain; it reads MRLSGRGLRC…TREMRIGAAA (200 aa). ATP is bound at residue 35 to 42; that stretch reads GRNGAGKT.

It belongs to the ABC transporter superfamily. CcmA exporter (TC 3.A.1.107) family. The complex is composed of two ATP-binding proteins (CcmA) and two transmembrane proteins (CcmB).

The protein resides in the cell inner membrane. It catalyses the reaction heme b(in) + ATP + H2O = heme b(out) + ADP + phosphate + H(+). Its function is as follows. Part of the ABC transporter complex CcmAB involved in the biogenesis of c-type cytochromes; once thought to export heme, this seems not to be the case, but its exact role is uncertain. Responsible for energy coupling to the transport system. The protein is Cytochrome c biogenesis ATP-binding export protein CcmA of Rhodopseudomonas palustris (strain HaA2).